The following is a 158-amino-acid chain: Transcription elongation factor GreA (158 aa).

Residues 47–68 are a coiled coil; the sequence is AEYDAAKEAQGLLELKIKKMEE.

The protein belongs to the GreA/GreB family.

In terms of biological role, necessary for efficient RNA polymerase transcription elongation past template-encoded arresting sites. The arresting sites in DNA have the property of trapping a certain fraction of elongating RNA polymerases that pass through, resulting in locked ternary complexes. Cleavage of the nascent transcript by cleavage factors such as GreA or GreB allows the resumption of elongation from the new 3'terminus. GreA releases sequences of 2 to 3 nucleotides. This chain is Transcription elongation factor GreA, found in Flavobacterium psychrophilum (strain ATCC 49511 / DSM 21280 / CIP 103535 / JIP02/86).